The chain runs to 34 residues: Photosystem II reaction center protein M (34 aa).

Residues 5–25 (ILAFIATTLFVLVPTAFLLII) form a helical membrane-spanning segment.

This sequence belongs to the PsbM family. In terms of assembly, PSII is composed of 1 copy each of membrane proteins PsbA, PsbB, PsbC, PsbD, PsbE, PsbF, PsbH, PsbI, PsbJ, PsbK, PsbL, PsbM, PsbT, PsbX, PsbY, PsbZ, Psb30/Ycf12, at least 3 peripheral proteins of the oxygen-evolving complex and a large number of cofactors. It forms dimeric complexes.

The protein resides in the plastid. It localises to the chloroplast thylakoid membrane. One of the components of the core complex of photosystem II (PSII). PSII is a light-driven water:plastoquinone oxidoreductase that uses light energy to abstract electrons from H(2)O, generating O(2) and a proton gradient subsequently used for ATP formation. It consists of a core antenna complex that captures photons, and an electron transfer chain that converts photonic excitation into a charge separation. This subunit is found at the monomer-monomer interface. The chain is Photosystem II reaction center protein M from Citrus sinensis (Sweet orange).